A 332-amino-acid chain; its full sequence is DNA-directed RNA polymerase subunit alpha (332 aa).

The alpha N-terminal domain (alpha-NTD) stretch occupies residues 1-226; that stretch reads MLIAQRPTLT…ELFGLCRELN (226 aa). An alpha C-terminal domain (alpha-CTD) region spans residues 245–332; sequence PEMNIPIEDL…GGTFFSPEDE (88 aa).

The protein belongs to the RNA polymerase alpha chain family. As to quaternary structure, homodimer. The RNAP catalytic core consists of 2 alpha, 1 beta, 1 beta' and 1 omega subunit. When a sigma factor is associated with the core the holoenzyme is formed, which can initiate transcription.

It carries out the reaction RNA(n) + a ribonucleoside 5'-triphosphate = RNA(n+1) + diphosphate. Functionally, DNA-dependent RNA polymerase catalyzes the transcription of DNA into RNA using the four ribonucleoside triphosphates as substrates. This chain is DNA-directed RNA polymerase subunit alpha, found in Bifidobacterium adolescentis (strain ATCC 15703 / DSM 20083 / NCTC 11814 / E194a).